Reading from the N-terminus, the 436-residue chain is T-box transcription factor TBX6 (436 aa).

Positions 100-273 form a DNA-binding region, T-box; sequence LWKEFSSVGT…ANPFAKGFRE (174 aa). The segment covering 271-284 has biased composition (basic and acidic residues); it reads FRENGRNCKRERDA. Disordered regions lie at residues 271-339 and 360-379; these read FREN…APAP and PSHL…SGRS. The span at 325-339 shows a compositional bias: low complexity; sequence EQAPAPGEATAAPAP.

As to quaternary structure, forms a dimeric complex with DNA (in vitro). Expressed in fetal tail bud, posterior spinal tissue, intervertebral disk and testis. Also expressed in adult testis, kidney, lung, muscle and thymus.

The protein localises to the nucleus. T-box transcription factor that plays an essential role in the determination of the fate of axial stem cells: neural vs mesodermal. Acts in part by down-regulating, a specific enhancer (N1) of SOX2, to inhibit neural development. Seems to play also an essential role in left/right axis determination and acts through effects on Notch signaling around the node as well as through an effect on the morphology and motility of the nodal cilia. This Homo sapiens (Human) protein is T-box transcription factor TBX6 (TBX6).